A 53-amino-acid polypeptide reads, in one-letter code: UPF0391 membrane protein PA5482 (53 aa).

A run of 2 helical transmembrane segments spans residues Trp4–Ala24 and Gly29–Gly49.

This sequence belongs to the UPF0391 family.

It is found in the cell membrane. This Pseudomonas aeruginosa (strain ATCC 15692 / DSM 22644 / CIP 104116 / JCM 14847 / LMG 12228 / 1C / PRS 101 / PAO1) protein is UPF0391 membrane protein PA5482.